Here is a 330-residue protein sequence, read N- to C-terminus: uncharacterized protein (330 aa).

This sequence belongs to the ornithine cyclodeaminase/mu-crystallin family.

It localises to the cytoplasm. This is an uncharacterized protein from Schizosaccharomyces pombe (strain 972 / ATCC 24843) (Fission yeast).